Consider the following 415-residue polypeptide: Multidrug resistance protein MdtA (415 aa).

Positions 1–21 (MKGSYKSRWVIVIVVVIAAIA) are cleaved as a signal peptide. 2 disordered regions span residues 32-56 (SRSAAPGATKQAQQSPAGGRRGMRA) and 392-415 (EAQSATTSEEKATSREYAKKGARS). Over residues 399–415 (SEEKATSREYAKKGARS) the composition is skewed to basic and acidic residues.

The protein belongs to the membrane fusion protein (MFP) (TC 8.A.1) family. Part of a tripartite efflux system composed of MdtA, MdtB and MdtC.

It is found in the cell inner membrane. Its function is as follows. The MdtABC tripartite complex confers resistance against novobiocin and deoxycholate. This chain is Multidrug resistance protein MdtA, found in Escherichia coli O7:K1 (strain IAI39 / ExPEC).